A 538-amino-acid polypeptide reads, in one-letter code: Reticuline oxidase (538 aa).

The first 23 residues, 1-23, serve as a signal peptide directing secretion; that stretch reads MENKTPIFFSLSIFLSLLNCALG. A disulfide bridge links cysteine 30 with cysteine 89. Asparagine 38 carries an N-linked (GlcNAc...) asparagine glycan. The region spanning 67 to 241 is the FAD-binding PCMH-type domain; sequence LISKPSAIIL…YAWKIKLLPV (175 aa). Positions 104–166 form a cross-link, 6-(S-cysteinyl)-8alpha-(pros-histidyl)-FAD (His-Cys); sequence HSYEGLSYTS…SKLGFTAGWC (63 aa). 2 N-linked (GlcNAc...) asparagine glycosylation sites follow: asparagine 423 and asparagine 471.

Belongs to the oxygen-dependent FAD-linked oxidoreductase family. FAD is required as a cofactor. Requires a metal cation as cofactor. Post-translationally, the FAD cofactor is bound via a bicovalent 6-S-cysteinyl, 8alpha-N1-histidyl FAD linkage.

It localises to the cytoplasmic vesicle. The catalysed reaction is (S)-reticuline + O2 = (S)-scoulerine + H2O2 + H(+). It functions in the pathway alkaloid biosynthesis; (S)-scoulerine biosynthesis; (S)-scoulerine from (S)-reticuline: step 1/1. Its function is as follows. Essential to the formation of benzophenanthridine alkaloids in the response of plants to pathogenic attack. Catalyzes the stereospecific conversion of the N-methyl moiety of (S)-reticuline into the berberine bridge carbon of (S)-scoulerine. The sequence is that of Reticuline oxidase (BBE1) from Eschscholzia californica (California poppy).